A 239-amino-acid chain; its full sequence is Large ribosomal subunit protein uL1 (239 aa).

This sequence belongs to the universal ribosomal protein uL1 family. As to quaternary structure, part of the 50S ribosomal subunit.

In terms of biological role, binds directly to 23S rRNA. The L1 stalk is quite mobile in the ribosome, and is involved in E site tRNA release. Functionally, protein L1 is also a translational repressor protein, it controls the translation of the L11 operon by binding to its mRNA. The sequence is that of Large ribosomal subunit protein uL1 from Rickettsia bellii (strain OSU 85-389).